Reading from the N-terminus, the 152-residue chain is Deoxyuridine 5'-triphosphate nucleotidohydrolase (152 aa).

Residues arginine 71–glycine 73, asparagine 84, and leucine 88–aspartate 90 each bind substrate.

The protein belongs to the dUTPase family. Mg(2+) is required as a cofactor.

It catalyses the reaction dUTP + H2O = dUMP + diphosphate + H(+). Its pathway is pyrimidine metabolism; dUMP biosynthesis; dUMP from dCTP (dUTP route): step 2/2. Its function is as follows. This enzyme is involved in nucleotide metabolism: it produces dUMP, the immediate precursor of thymidine nucleotides and it decreases the intracellular concentration of dUTP so that uracil cannot be incorporated into DNA. The sequence is that of Deoxyuridine 5'-triphosphate nucleotidohydrolase from Xanthomonas campestris pv. campestris (strain 8004).